Here is a 385-residue protein sequence, read N- to C-terminus: 8-amino-7-oxononanoate synthase (385 aa).

Arg-21 contacts substrate. Pyridoxal 5'-phosphate is bound at residue 108–109 (GF). His-133 provides a ligand contact to substrate. Residues Ser-179, His-207, and Thr-233 each coordinate pyridoxal 5'-phosphate. An N6-(pyridoxal phosphate)lysine modification is found at Lys-236. Substrate is bound at residue Thr-352.

It belongs to the class-II pyridoxal-phosphate-dependent aminotransferase family. BioF subfamily. As to quaternary structure, homodimer. The cofactor is pyridoxal 5'-phosphate.

The enzyme catalyses 6-carboxyhexanoyl-[ACP] + L-alanine + H(+) = (8S)-8-amino-7-oxononanoate + holo-[ACP] + CO2. The protein operates within cofactor biosynthesis; biotin biosynthesis. Functionally, catalyzes the decarboxylative condensation of pimeloyl-[acyl-carrier protein] and L-alanine to produce 8-amino-7-oxononanoate (AON), [acyl-carrier protein], and carbon dioxide. The chain is 8-amino-7-oxononanoate synthase from Salmonella dublin (strain CT_02021853).